A 121-amino-acid polypeptide reads, in one-letter code: NADH-quinone oxidoreductase subunit A 1 (121 aa).

3 helical membrane passes run 6–26, 62–82, and 90–110; these read FPIF…LSIG, LVAM…PWAV, and FYGL…YYYI.

The protein belongs to the complex I subunit 3 family. NDH-1 is composed of 14 different subunits. Subunits NuoA, H, J, K, L, M, N constitute the membrane sector of the complex.

The protein localises to the cell inner membrane. The catalysed reaction is a quinone + NADH + 5 H(+)(in) = a quinol + NAD(+) + 4 H(+)(out). In terms of biological role, NDH-1 shuttles electrons from NADH, via FMN and iron-sulfur (Fe-S) centers, to quinones in the respiratory chain. The immediate electron acceptor for the enzyme in this species is believed to be a menaquinone. Couples the redox reaction to proton translocation (for every two electrons transferred, four hydrogen ions are translocated across the cytoplasmic membrane), and thus conserves the redox energy in a proton gradient. The sequence is that of NADH-quinone oxidoreductase subunit A 1 from Chloroherpeton thalassium (strain ATCC 35110 / GB-78).